Consider the following 207-residue polypeptide: Large ribosomal subunit protein uL4 (207 aa).

The tract at residues 52-76 is disordered; the sequence is KNTSLVSGGGKKPWKQKGTGRARQG.

This sequence belongs to the universal ribosomal protein uL4 family. As to quaternary structure, part of the 50S ribosomal subunit.

Functionally, one of the primary rRNA binding proteins, this protein initially binds near the 5'-end of the 23S rRNA. It is important during the early stages of 50S assembly. It makes multiple contacts with different domains of the 23S rRNA in the assembled 50S subunit and ribosome. In terms of biological role, forms part of the polypeptide exit tunnel. The protein is Large ribosomal subunit protein uL4 of Myxococcus xanthus (strain DK1622).